A 160-amino-acid polypeptide reads, in one-letter code: Eukaryotic translation initiation factor 5A (160 aa).

Residues 1 to 13 (MSDSEEHHFESKA) show a composition bias toward basic and acidic residues. Residues 1 to 22 (MSDSEEHHFESKADAGASKTYP) form a disordered region. Lysine 53 is modified (hypusine).

It belongs to the eIF-5A family. In terms of processing, lys-53 undergoes hypusination, a unique post-translational modification that consists in the addition of a butylamino group from spermidine to lysine side chain, leading to the formation of the unusual amino acid hypusine. eIF-5As are the only known proteins to undergo this modification, which is essential for their function.

Functionally, translation factor that promotes translation elongation and termination, particularly upon ribosome stalling at specific amino acid sequence contexts. Binds between the exit (E) and peptidyl (P) site of the ribosome and promotes rescue of stalled ribosome: specifically required for efficient translation of polyproline-containing peptides as well as other motifs that stall the ribosome. Acts as a ribosome quality control (RQC) cofactor by joining the RQC complex to facilitate peptidyl transfer during CAT tailing step. The polypeptide is Eukaryotic translation initiation factor 5A (TIF5A) (Zea mays (Maize)).